A 237-amino-acid chain; its full sequence is E3 ubiquitin-protein ligase RNF166 (237 aa).

The RING-type zinc finger occupies 33–73; the sequence is CPICLEVYHRPVAIGSCGHTFCGECLQPCLQVPSPLCPLCR. 4 residues coordinate Zn(2+): Cys98, Cys101, His113, and Cys117. The C2HC RNF-type zinc finger occupies 98–117; sequence CRGCNKKVTLAKMRVHISSC. One can recognise a UIM domain in the interval 221-237; the sequence is DEEAAFQAALALSLSEN.

Its subcellular location is the cytoplasm. The enzyme catalyses S-ubiquitinyl-[E2 ubiquitin-conjugating enzyme]-L-cysteine + [acceptor protein]-L-lysine = [E2 ubiquitin-conjugating enzyme]-L-cysteine + N(6)-ubiquitinyl-[acceptor protein]-L-lysine.. The protein operates within protein modification; protein ubiquitination. E3 ubiquitin-protein ligase that promotes the ubiquitination of different substrates. In turn, participates in different biological processes including interferon production or autophagy. Plays a role in the activation of RNA virus-induced interferon-beta production by promoting the ubiquitination of TRAF3 and TRAF6. Also plays a role in the early recruitment of autophagy adapters to bacteria. Mediates 'Lys-29' and 'Lys-33'-linked ubiquitination of SQSTM1 leading to xenophagic targeting of bacteria and inhibition of their replication. The sequence is that of E3 ubiquitin-protein ligase RNF166 (RNF166) from Homo sapiens (Human).